Consider the following 570-residue polypeptide: Frizzled-2 (570 aa).

Residues 1 to 28 (MRARSALPRSALPRLLLPLLLLPAAGPA) form the signal peptide. Residues 29-252 (QFHGEKGISI…HHHTRFARLW (224 aa)) are Extracellular-facing. Residues 39–158 (PDHGFCQPIS…HGAEQICVGQ (120 aa)) enclose the FZ domain. 5 disulfide bridges follow: C44–C105, C52–C98, C89–C126, C115–C155, and C119–C143. An N-linked (GlcNAc...) asparagine glycan is attached at N58. A glycan (N-linked (GlcNAc...) asparagine) is linked at N159. The disordered stretch occupies residues 166–194 (PALLTTAPPSGLQPGAGGTPGGPGGGGAP). A compositionally biased stretch (gly residues) spans 179-193 (PGAGGTPGGPGGGGA). The helical transmembrane segment at 253–273 (ILTWSVLCCASTFFTVTTSLV) threads the bilayer. Residues 274–284 (AMQRFRYPERP) are Cytoplasmic-facing. Residues 285 to 305 (IIFLSGCYTMVSVAYIAGFVL) form a helical membrane-spanning segment. Topologically, residues 306-332 (QERVVCNERFSEDGYRTVGQGTKKEGC) are extracellular. A helical transmembrane segment spans residues 333–353 (TILFMMLYFFSMASSIWWVIL). Residues 354–375 (SLTWFLAAGMKWGHAAIEANSQ) lie on the Cytoplasmic side of the membrane. Residues 376–396 (YFHLAAWAVPAVKTITILAMG) form a helical membrane-spanning segment. Over 397 to 419 (QIDGDLLSGVCFVGLNRLDPLRG) the chain is Extracellular. The chain crosses the membrane as a helical span at residues 420–440 (FVLAPLFVYLFIGTSFLLAGF). Over 441 to 466 (VSLFRIRTIMKHDGTKTEPLERLMVR) the chain is Cytoplasmic. Residues 467–487 (IGVFSVLYTVPATIVIACYFY) form a helical membrane-spanning segment. At 488–524 (EQAFREHWERSWVSQHCKSLAIPCPAHYTPRTSPDFT) the chain is on the extracellular side. Residues 525 to 545 (VYMIKYLMTLIVGITSGFWIW) form a helical membrane-spanning segment. Residues 546-570 (SGKTLHSWRKFYTRLTNSRHGETTV) are Cytoplasmic-facing. The Lys-Thr-X-X-X-Trp motif, mediates interaction with the PDZ domain of Dvl family members signature appears at 548–553 (KTLHSW). A PDZ-binding motif is present at residues 568 to 570 (TTV).

Belongs to the G-protein coupled receptor Fz/Smo family. Post-translationally, ubiquitinated by ZNRF3, leading to its degradation by the proteasome. As to expression, widely expressed. Most abundant in kidney, liver, uterus, ovary and heart. Lower levels seen in brain and intestine. Extremely low in calvaria, mammary glands and testis.

The protein localises to the membrane. Its subcellular location is the cell membrane. Its function is as follows. Receptor for Wnt proteins. Most of frizzled receptors are coupled to the beta-catenin canonical signaling pathway, which leads to the activation of disheveled proteins, inhibition of GSK-3 kinase, nuclear accumulation of beta-catenin and activation of Wnt target genes. A second signaling pathway involving PKC and calcium fluxes has been seen for some family members, but it is not yet clear if it represents a distinct pathway or if it can be integrated in the canonical pathway, as PKC seems to be required for Wnt-mediated inactivation of GSK-3 kinase. Both pathways seem to involve interactions with G-proteins. May be involved in transduction and intercellular transmission of polarity information during tissue morphogenesis and/or in differentiated tissues. Activation by Wnt5A stimulates PKC activity via a G-protein-dependent mechanism. This chain is Frizzled-2 (Fzd2), found in Rattus norvegicus (Rat).